A 300-amino-acid chain; its full sequence is Formyltetrahydrofolate deformylase (300 aa).

Residues 21-102 (RLLVSCPDQP…MTWSLTLASE (82 aa)) form the ACT domain. D244 is a catalytic residue.

This sequence belongs to the PurU family.

The enzyme catalyses (6R)-10-formyltetrahydrofolate + H2O = (6S)-5,6,7,8-tetrahydrofolate + formate + H(+). It participates in purine metabolism; IMP biosynthesis via de novo pathway; formate from 10-formyl-5,6,7,8-tetrahydrofolate: step 1/1. Its function is as follows. Catalyzes the hydrolysis of 10-formyltetrahydrofolate (formyl-FH4) to formate and tetrahydrofolate (FH4). This is Formyltetrahydrofolate deformylase from Bacillus subtilis (strain 168).